The following is a 350-amino-acid chain: Twinfilin-1 (350 aa).

Serine 2 is subject to N-acetylserine. Residues serine 2–leucine 139 enclose the ADF-H 1 domain. 2 positions are modified to phosphoserine: serine 143 and serine 277. The ADF-H 2 domain maps to leucine 175 to histidine 313. Tyrosine 309 is modified (phosphotyrosine). The segment at glutamine 316–aspartate 350 is disordered. Threonine 349 carries the phosphothreonine modification.

Belongs to the actin-binding proteins ADF family. Twinfilin subfamily. As to quaternary structure, interacts with G-actin; ADP-actin form and capping protein (CP). May also be able to interact with TWF2 and phosphoinositides, PI(4,5)P2. When bound to PI(4,5)P2, it is down-regulated. Interacts with ACTG1. Phosphorylated on serine and threonine residues.

The protein resides in the cytoplasm. The protein localises to the cytoskeleton. Its function is as follows. Actin-binding protein involved in motile and morphological processes. Inhibits actin polymerization, likely by sequestering G-actin. By capping the barbed ends of filaments, it also regulates motility. Seems to play an important role in clathrin-mediated endocytosis and distribution of endocytic organelles. This is Twinfilin-1 (Twf1) from Rattus norvegicus (Rat).